Consider the following 308-residue polypeptide: tRNA dimethylallyltransferase (308 aa).

An ATP-binding site is contributed by 9-16; it reads GPTAVGKT. A substrate-binding site is contributed by 11–16; the sequence is TAVGKT. The tract at residues 34–37 is interaction with substrate tRNA; sequence DSMQ.

The protein belongs to the IPP transferase family. In terms of assembly, monomer. Mg(2+) serves as cofactor.

The enzyme catalyses adenosine(37) in tRNA + dimethylallyl diphosphate = N(6)-dimethylallyladenosine(37) in tRNA + diphosphate. In terms of biological role, catalyzes the transfer of a dimethylallyl group onto the adenine at position 37 in tRNAs that read codons beginning with uridine, leading to the formation of N6-(dimethylallyl)adenosine (i(6)A). The polypeptide is tRNA dimethylallyltransferase (Lactobacillus delbrueckii subsp. bulgaricus (strain ATCC 11842 / DSM 20081 / BCRC 10696 / JCM 1002 / NBRC 13953 / NCIMB 11778 / NCTC 12712 / WDCM 00102 / Lb 14)).